Reading from the N-terminus, the 349-residue chain is Neutral protease 2 homolog ACLA_052720 (349 aa).

The N-terminal stretch at 1–19 is a signal peptide; that stretch reads MQLTVLASAILALAQGALA. The propeptide occupies 20-172; the sequence is IPAKAPALDV…PAAINLLDRR (153 aa). 2 cysteine pairs are disulfide-bonded: cysteine 178–cysteine 250 and cysteine 257–cysteine 275. Residue histidine 300 participates in Zn(2+) binding. Residue glutamate 301 is part of the active site. Positions 304 and 315 each coordinate Zn(2+).

Belongs to the peptidase M35 family. It depends on Zn(2+) as a cofactor.

The protein resides in the secreted. It carries out the reaction Preferential cleavage of bonds with hydrophobic residues in P1'. Also 3-Asn-|-Gln-4 and 8-Gly-|-Ser-9 bonds in insulin B chain.. Secreted metalloproteinase that allows assimilation of proteinaceous substrates. Shows high activities on basic nuclear substrates such as histone and protamine. This is Neutral protease 2 homolog ACLA_052720 from Aspergillus clavatus (strain ATCC 1007 / CBS 513.65 / DSM 816 / NCTC 3887 / NRRL 1 / QM 1276 / 107).